A 488-amino-acid chain; its full sequence is 3-octaprenyl-4-hydroxybenzoate carboxy-lyase (488 aa).

A Mn(2+)-binding site is contributed by Asn172. Residues 175-177, 189-191, and 194-195 contribute to the prenylated FMN site; these read IYR, RWL, and RG. Glu238 is a Mn(2+) binding site. The Proton donor role is filled by Asp287.

The protein belongs to the UbiD family. Homohexamer. Prenylated FMN serves as cofactor. The cofactor is Mn(2+).

It localises to the cell membrane. The catalysed reaction is a 4-hydroxy-3-(all-trans-polyprenyl)benzoate + H(+) = a 2-(all-trans-polyprenyl)phenol + CO2. It participates in cofactor biosynthesis; ubiquinone biosynthesis. Catalyzes the decarboxylation of 3-octaprenyl-4-hydroxy benzoate to 2-octaprenylphenol, an intermediate step in ubiquinone biosynthesis. The polypeptide is 3-octaprenyl-4-hydroxybenzoate carboxy-lyase (Pseudomonas putida (strain W619)).